Consider the following 209-residue polypeptide: Uracil phosphoribosyltransferase (209 aa).

Residues R79, R104, and 131-139 (DPMLATGNS) each bind 5-phospho-alpha-D-ribose 1-diphosphate. Residues I194 and 199 to 201 (GDA) contribute to the uracil site. 5-phospho-alpha-D-ribose 1-diphosphate is bound at residue D200.

It belongs to the UPRTase family. Requires Mg(2+) as cofactor.

It catalyses the reaction UMP + diphosphate = 5-phospho-alpha-D-ribose 1-diphosphate + uracil. It participates in pyrimidine metabolism; UMP biosynthesis via salvage pathway; UMP from uracil: step 1/1. Allosterically activated by GTP. Its function is as follows. Catalyzes the conversion of uracil and 5-phospho-alpha-D-ribose 1-diphosphate (PRPP) to UMP and diphosphate. The sequence is that of Uracil phosphoribosyltransferase from Agrobacterium fabrum (strain C58 / ATCC 33970) (Agrobacterium tumefaciens (strain C58)).